Here is a 309-residue protein sequence, read N- to C-terminus: NADH-cytochrome b5 reductase 2 (309 aa).

A helical membrane pass occupies residues 3 to 23; sequence ILTAPVLIGVSIVVITVLYLF. The region spanning 48–160 is the FAD-binding FR-type domain; it reads SVKYPLPLIE…RGPNGLLVYN (113 aa). FAD is bound by residues 140–170 and 179–214; these read DNMK…IRPD and KFKH…VCSL.

It belongs to the flavoprotein pyridine nucleotide cytochrome reductase family. It depends on FAD as a cofactor.

Its subcellular location is the membrane. The catalysed reaction is 2 Fe(III)-[cytochrome b5] + NADH = 2 Fe(II)-[cytochrome b5] + NAD(+) + H(+). Its function is as follows. NADH-cytochrome b5 reductases are involved in desaturation and elongation of fatty acids, cholesterol biosynthesis and drug metabolism. The chain is NADH-cytochrome b5 reductase 2 (cyb5r2) from Danio rerio (Zebrafish).